Reading from the N-terminus, the 383-residue chain is Acetylornithine deacetylase (383 aa).

A Zn(2+)-binding site is contributed by His80. Asp82 is a catalytic residue. Asp112 provides a ligand contact to Zn(2+). The active site involves Glu144. Positions 145, 169, and 355 each coordinate Zn(2+).

The protein belongs to the peptidase M20A family. ArgE subfamily. Homodimer. Zn(2+) is required as a cofactor. Requires Co(2+) as cofactor. Glutathione serves as cofactor.

The protein resides in the cytoplasm. The enzyme catalyses N(2)-acetyl-L-ornithine + H2O = L-ornithine + acetate. It participates in amino-acid biosynthesis; L-arginine biosynthesis; L-ornithine from N(2)-acetyl-L-ornithine (linear): step 1/1. Functionally, catalyzes the hydrolysis of the amide bond of N(2)-acetylated L-amino acids. Cleaves the acetyl group from N-acetyl-L-ornithine to form L-ornithine, an intermediate in L-arginine biosynthesis pathway, and a branchpoint in the synthesis of polyamines. This is Acetylornithine deacetylase from Salmonella choleraesuis (strain SC-B67).